Reading from the N-terminus, the 1896-residue chain is Obscurin-like protein 1 (1896 aa).

Serine 10 is subject to Phosphoserine. The region spanning proline 12–threonine 100 is the Ig-like 1 domain. The segment at phenylalanine 17–arginine 19 is interaction with TTN. Cysteine 33 and cysteine 84 are joined by a disulfide. The segment at arginine 85 to tyrosine 94 is interaction with TTN. Residues alanine 106–alanine 127 form a disordered region. 3 Ig-like domains span residues proline 128–glutamine 225, proline 243–serine 330, and proline 339–threonine 425. 3 disulfides stabilise this stretch: cysteine 149–cysteine 209, cysteine 267–cysteine 319, and cysteine 362–cysteine 412. One can recognise a Fibronectin type-III domain in the interval proline 517–threonine 615. Ig-like domains follow at residues proline 714–threonine 800, proline 804–threonine 893, proline 902–threonine 982, proline 986–threonine 1075, proline 1078–glutamine 1172, leucine 1174–glutamine 1261, proline 1265–proline 1357, proline 1357–serine 1534, proline 1628–alanine 1720, and proline 1794–asparagine 1896. 6 cysteine pairs are disulfide-bonded: cysteine 738–cysteine 788, cysteine 829–cysteine 879, cysteine 920–cysteine 970, cysteine 1011–cysteine 1061, cysteine 1103–cysteine 1153, and cysteine 1195–cysteine 1245. Intrachain disulfides connect cysteine 1381/cysteine 1522 and cysteine 1650/cysteine 1700.

As to quaternary structure, component of the 3M complex, composed of core components CUL7, CCDC8 and OBSL1. Interacts with CCDC8. Interacts with CUL7; the interaction is direct. Interacts with FBXW8. Interacts (via N-terminal Ig-like domain) with TTN/titin (via C-terminal Ig-like domain); the interaction is direct. Widely expressed, with predominant levels found in the heart.

Its subcellular location is the cytoplasm. It is found in the cytoskeleton. The protein resides in the microtubule organizing center. It localises to the centrosome. The protein localises to the perinuclear region. Its subcellular location is the golgi apparatus. Functionally, core component of the 3M complex, a complex required to regulate microtubule dynamics and genome integrity. It is unclear how the 3M complex regulates microtubules, it could act by controlling the level of a microtubule stabilizer. Acts as a regulator of the Cul7-RING(FBXW8) ubiquitin-protein ligase, playing a critical role in the ubiquitin ligase pathway that regulates Golgi morphogenesis and dendrite patterning in brain. Required to localize CUL7 to the Golgi apparatus in neurons. This is Obscurin-like protein 1 from Homo sapiens (Human).